Reading from the N-terminus, the 330-residue chain is Ketol-acid reductoisomerase (NADP(+)) (330 aa).

The KARI N-terminal Rossmann domain occupies 3–184; the sequence is LPVYYDKDID…GGGRMGVLKT (182 aa). NADP(+)-binding positions include 26–29, Ser-52, and Ser-54; that span reads YGAQ. His-109 is a catalytic residue. Gly-135 contacts NADP(+). In terms of domain architecture, KARI C-terminal knotted spans 185 to 329; the sequence is SFKEECESDL…EILRAPFNHK (145 aa). Asp-193, Glu-197, Glu-229, and Glu-233 together coordinate Mg(2+). Position 254 (Ser-254) interacts with substrate.

The protein belongs to the ketol-acid reductoisomerase family. It depends on Mg(2+) as a cofactor.

It carries out the reaction (2R)-2,3-dihydroxy-3-methylbutanoate + NADP(+) = (2S)-2-acetolactate + NADPH + H(+). The catalysed reaction is (2R,3R)-2,3-dihydroxy-3-methylpentanoate + NADP(+) = (S)-2-ethyl-2-hydroxy-3-oxobutanoate + NADPH + H(+). Its pathway is amino-acid biosynthesis; L-isoleucine biosynthesis; L-isoleucine from 2-oxobutanoate: step 2/4. It functions in the pathway amino-acid biosynthesis; L-valine biosynthesis; L-valine from pyruvate: step 2/4. In terms of biological role, involved in the biosynthesis of branched-chain amino acids (BCAA). Catalyzes an alkyl-migration followed by a ketol-acid reduction of (S)-2-acetolactate (S2AL) to yield (R)-2,3-dihydroxy-isovalerate. In the isomerase reaction, S2AL is rearranged via a Mg-dependent methyl migration to produce 3-hydroxy-3-methyl-2-ketobutyrate (HMKB). In the reductase reaction, this 2-ketoacid undergoes a metal-dependent reduction by NADPH to yield (R)-2,3-dihydroxy-isovalerate. The sequence is that of Ketol-acid reductoisomerase (NADP(+)) from Helicobacter pylori (strain HPAG1).